A 232-amino-acid polypeptide reads, in one-letter code: Protein FAM228B (232 aa).

This sequence belongs to the FAM228 family.

In Mus musculus (Mouse), this protein is Protein FAM228B (Fam228b).